Reading from the N-terminus, the 688-residue chain is Polyribonucleotide nucleotidyltransferase (688 aa).

2 residues coordinate Mg(2+): aspartate 484 and aspartate 490. The region spanning 550–609 (PTTEIFNVAPDKIVEIIGQGGRVIKEIVEKFEVKIDLNKPSGEVKIMGNKERVLKTKEFI) is the KH domain. An S1 motif domain is found at 626–688 (DEVLEAQVKR…NKGKIALDLA (63 aa)).

The protein belongs to the polyribonucleotide nucleotidyltransferase family. Mg(2+) is required as a cofactor.

The protein localises to the cytoplasm. The enzyme catalyses RNA(n+1) + phosphate = RNA(n) + a ribonucleoside 5'-diphosphate. Its function is as follows. Involved in mRNA degradation. Catalyzes the phosphorolysis of single-stranded polyribonucleotides processively in the 3'- to 5'-direction. The polypeptide is Polyribonucleotide nucleotidyltransferase (Helicobacter pylori (strain G27)).